The primary structure comprises 352 residues: DNA polymerase IV (352 aa).

Residues Ile6–Gly187 form the UmuC domain. Mg(2+)-binding residues include Asp10 and Asp105. Glu106 is an active-site residue.

Belongs to the DNA polymerase type-Y family. In terms of assembly, monomer. The cofactor is Mg(2+).

The protein localises to the cytoplasm. The catalysed reaction is DNA(n) + a 2'-deoxyribonucleoside 5'-triphosphate = DNA(n+1) + diphosphate. Functionally, poorly processive, error-prone DNA polymerase involved in untargeted mutagenesis. Copies undamaged DNA at stalled replication forks, which arise in vivo from mismatched or misaligned primer ends. These misaligned primers can be extended by PolIV. Exhibits no 3'-5' exonuclease (proofreading) activity. May be involved in translesional synthesis, in conjunction with the beta clamp from PolIII. The polypeptide is DNA polymerase IV (Ectopseudomonas mendocina (strain ymp) (Pseudomonas mendocina)).